The primary structure comprises 65 residues: Conotoxin Lt5.1 (65 aa).

The first 19 residues, 1 to 19, serve as a signal peptide directing secretion; that stretch reads MRCLPVFIILLLLIPSAPS. A propeptide spanning residues 20–48 is cleaved from the precursor; it reads VDAQRKTKDDVPLASFHDNAKRTLKRLWN.

The protein belongs to the conotoxin T superfamily. Post-translationally, contains 2 disulfide bonds that can be either 'C1-C3, C2-C4' or 'C1-C4, C2-C3', since these disulfide connectivities have been observed for conotoxins with cysteine framework V (for examples, see AC P0DQQ7 and AC P81755). In terms of tissue distribution, expressed by the venom duct.

Its subcellular location is the secreted. In Conus litteratus (Lettered cone), this protein is Conotoxin Lt5.1.